The following is a 248-amino-acid chain: MSIDRQTLLSVAKSIRSGAKSIRAQISPIHPKGYPFVGGFALASIILFWIWTPLGWIGTLLTIWCALFFRNPARVTPVREGLVVSPADGRISMIAPVVPPAELELGEQPMVRISIFMSVFNCHVNRSPVAGKIERIVYRPGKFINAELDKASEDNERNSLVISTPNNGLVGVVQIAGLVARRIVTFVHDGQTLETGERFGLIRFGSRLDVFLPEGTQLLVSEGQTAIAGETVLADFQQADGGRTYRSN.

Ser206 serves as the catalytic Schiff-base intermediate with substrate; via pyruvic acid. The residue at position 206 (Ser206) is a Pyruvic acid (Ser); by autocatalysis.

This sequence belongs to the phosphatidylserine decarboxylase family. PSD-A subfamily. Heterodimer of a large membrane-associated beta subunit and a small pyruvoyl-containing alpha subunit. The cofactor is pyruvate. Post-translationally, is synthesized initially as an inactive proenzyme. Formation of the active enzyme involves a self-maturation process in which the active site pyruvoyl group is generated from an internal serine residue via an autocatalytic post-translational modification. Two non-identical subunits are generated from the proenzyme in this reaction, and the pyruvate is formed at the N-terminus of the alpha chain, which is derived from the carboxyl end of the proenzyme. The post-translation cleavage follows an unusual pathway, termed non-hydrolytic serinolysis, in which the side chain hydroxyl group of the serine supplies its oxygen atom to form the C-terminus of the beta chain, while the remainder of the serine residue undergoes an oxidative deamination to produce ammonia and the pyruvoyl prosthetic group on the alpha chain.

It localises to the cell membrane. The enzyme catalyses a 1,2-diacyl-sn-glycero-3-phospho-L-serine + H(+) = a 1,2-diacyl-sn-glycero-3-phosphoethanolamine + CO2. It participates in phospholipid metabolism; phosphatidylethanolamine biosynthesis; phosphatidylethanolamine from CDP-diacylglycerol: step 2/2. Its function is as follows. Catalyzes the formation of phosphatidylethanolamine (PtdEtn) from phosphatidylserine (PtdSer). The chain is Phosphatidylserine decarboxylase proenzyme from Nitrobacter hamburgensis (strain DSM 10229 / NCIMB 13809 / X14).